The sequence spans 497 residues: Type II secretion system protein E (497 aa).

255-262 serves as a coordination point for ATP; it reads GPTGSGKS. Cysteine 388, cysteine 391, cysteine 419, and cysteine 422 together coordinate Zn(2+).

This sequence belongs to the GSP E family. In terms of assembly, forms homooligomers; most probably hexamers. Interacts with PulL/GspL. Zn(2+) serves as cofactor.

It localises to the cell inner membrane. The catalysed reaction is ATP + H2O + cellular proteinSide 1 = ADP + phosphate + cellular proteinSide 2.. Its function is as follows. ATPase component of the type II secretion system required for the energy-dependent secretion of extracellular factors such as proteases and toxins from the periplasm. Acts as a molecular motor to provide the energy that is required for assembly of the pseudopilus and the extrusion of substrates generated in the cytoplasm. The chain is Type II secretion system protein E (pulE) from Klebsiella pneumoniae.